A 239-amino-acid polypeptide reads, in one-letter code: Large ribosomal subunit protein uL2 (239 aa).

2 disordered regions span residues 1–20 (MGHRIKTQNRGRGGPTYRAP) and 202–239 (FGGGGHQHTGRPKTVSRGTSPGRKVGSVAARRTGRRKR).

This sequence belongs to the universal ribosomal protein uL2 family. Part of the 50S ribosomal subunit. Forms a bridge to the 30S subunit in the 70S ribosome.

Functionally, one of the primary rRNA binding proteins. Required for association of the 30S and 50S subunits to form the 70S ribosome, for tRNA binding and peptide bond formation. It has been suggested to have peptidyltransferase activity; this is somewhat controversial. Makes several contacts with the 16S rRNA in the 70S ribosome. The polypeptide is Large ribosomal subunit protein uL2 (Methanosphaerula palustris (strain ATCC BAA-1556 / DSM 19958 / E1-9c)).